The following is a 622-amino-acid chain: Low affinity potassium transport system protein Kup (622 aa).

12 helical membrane-spanning segments follow: residues 9–29 (LPAI…TSPL), 49–69 (VFGF…IKYL), 103–123 (VIMG…TPAI), 137–157 (PQLD…LFMI), 165–185 (VGKL…GLGL), 213–233 (VSFI…ALYA), 247–267 (WFTV…ALLL), 276–296 (PFFL…AALA), 337–357 (IYIP…IVSF), 363–383 (LAAA…ILST), 396–416 (FVAL…TANL), and 419–439 (LLSG…VMTT).

This sequence belongs to the HAK/KUP transporter (TC 2.A.72) family.

The protein localises to the cell inner membrane. The catalysed reaction is K(+)(in) + H(+)(in) = K(+)(out) + H(+)(out). Responsible for the low-affinity transport of potassium into the cell. Likely operates as a K(+):H(+) symporter. This is Low affinity potassium transport system protein Kup from Escherichia coli O157:H7 (strain EC4115 / EHEC).